Reading from the N-terminus, the 316-residue chain is Petrobactin import system permease protein YclN (316 aa).

The next 8 membrane-spanning stretches (helical) occupy residues 5–25, 49–69, 94–114, 133–153, 181–201, 224–244, 268–288, and 290–310; these read YLFILLIILAVTSVFIGVEDL, LISIVIAGLSMSICGLIMQQI, LLLFTSASPLIKMLVAFVFAL, IFIPLVGLMLGNIVSSIATFI, LLYLSIPLVIIAYVYADKFTL, LIIVSLITSLVILTVGMLPFL, VLLGAVFVLFCDILGRIIIFP, and EISIGLMVGIIGSGIFLFMLL.

This sequence belongs to the binding-protein-dependent transport system permease family. FecCD subfamily. As to quaternary structure, the complex is composed of two ATP-binding proteins (YclP), two transmembrane proteins (YclN and YclO) and a solute-binding protein (YclQ).

It localises to the cell membrane. Its function is as follows. Part of the ABC transporter complex YclNOPQ involved in uptake of ferric-petrobactin. Petrobactin is a photoreactive 3,4-catecholate siderophore produced by many members of the B.cereus group, including B.anthracis. Probably responsible for the translocation of the substrate across the membrane. The protein is Petrobactin import system permease protein YclN (yclN) of Bacillus subtilis (strain 168).